A 366-amino-acid polypeptide reads, in one-letter code: DNA-directed RNA polymerase subunit alpha (366 aa).

An alpha N-terminal domain (alpha-NTD) region spans residues 1 to 260 (MAISDNGGGS…DQLQSFIGSE (260 aa)). An alpha C-terminal domain (alpha-CTD) region spans residues 274–366 (EGALPYDHNL…ENLSKQYSED (93 aa)).

It belongs to the RNA polymerase alpha chain family. As to quaternary structure, homodimer. The RNAP catalytic core consists of 2 alpha, 1 beta, 1 beta' and 1 omega subunit. When a sigma factor is associated with the core the holoenzyme is formed, which can initiate transcription.

The catalysed reaction is RNA(n) + a ribonucleoside 5'-triphosphate = RNA(n+1) + diphosphate. Its function is as follows. DNA-dependent RNA polymerase catalyzes the transcription of DNA into RNA using the four ribonucleoside triphosphates as substrates. The polypeptide is DNA-directed RNA polymerase subunit alpha (Anaplasma marginale (strain St. Maries)).